The primary structure comprises 344 residues: Sorting nexin-16 (344 aa).

A compositionally biased stretch (pro residues) spans 1-10; sequence MATPYVPVPM. The disordered stretch occupies residues 1 to 72; it reads MATPYVPVPM…SASSMCGSPL (72 aa). Over residues 14–26 the composition is skewed to polar residues; the sequence is NSASSFTNNRNQR. Positions 27–40 are enriched in low complexity; sequence SSSFGSVSTSSTSS. Residues 52–68 are compositionally biased toward polar residues; sequence LKQTNVQDQMDSASSMC. The 114-residue stretch at 105–218 folds into the PX domain; that stretch reads DRPSTPTILG…EFLCLDDPPG (114 aa). 3 residues coordinate a 1,2-diacyl-sn-glycero-3-phospho-(1D-myo-inositol-3-phosphate): arginine 144, threonine 146, and arginine 184. The residue at position 222 (serine 222) is a Phosphoserine. Residues 223-278 are a coiled coil; that stretch reads LEESRAFCETLEETNYHLQRELLEKQKEVESLKKLLGEKQLHIDALETRIRTLSLE.

This sequence belongs to the sorting nexin family. As to quaternary structure, homooligomer. Interacts with EGFR.

It is found in the early endosome membrane. The protein resides in the late endosome membrane. The protein localises to the cytoplasm. Its subcellular location is the lysosome. May be involved in several stages of intracellular trafficking. Plays a role in protein transport from early to late endosomes. Plays a role in protein transport to the lysosome. Promotes degradation of EGFR after EGF signaling. In Mus musculus (Mouse), this protein is Sorting nexin-16 (Snx16).